The sequence spans 331 residues: Adenosine deaminase (331 aa).

Zn(2+)-binding residues include His12 and His14. Substrate contacts are provided by His14, Asp16, and Gly170. His197 contributes to the Zn(2+) binding site. Glu200 acts as the Proton donor in catalysis. Asp278 is a binding site for Zn(2+). Asp279 contributes to the substrate binding site.

The protein belongs to the metallo-dependent hydrolases superfamily. Adenosine and AMP deaminases family. Adenosine deaminase subfamily. Zn(2+) serves as cofactor.

It catalyses the reaction adenosine + H2O + H(+) = inosine + NH4(+). The catalysed reaction is 2'-deoxyadenosine + H2O + H(+) = 2'-deoxyinosine + NH4(+). Catalyzes the hydrolytic deamination of adenosine and 2-deoxyadenosine. This is Adenosine deaminase from Shewanella sp. (strain MR-4).